The chain runs to 692 residues: Elongation factor G (692 aa).

A tr-type G domain is found at 9–284; sequence HMVRNIGIAA…AVVDYLPAPD (276 aa). GTP contacts are provided by residues 18–25, 82–86, and 136–139; these read AHIDAGKT, DTPGH, and NKMD.

This sequence belongs to the TRAFAC class translation factor GTPase superfamily. Classic translation factor GTPase family. EF-G/EF-2 subfamily.

The protein resides in the cytoplasm. Functionally, catalyzes the GTP-dependent ribosomal translocation step during translation elongation. During this step, the ribosome changes from the pre-translocational (PRE) to the post-translocational (POST) state as the newly formed A-site-bound peptidyl-tRNA and P-site-bound deacylated tRNA move to the P and E sites, respectively. Catalyzes the coordinated movement of the two tRNA molecules, the mRNA and conformational changes in the ribosome. The chain is Elongation factor G from Campylobacter curvus (strain 525.92).